Here is a 177-residue protein sequence, read N- to C-terminus: Small ribosomal subunit protein uS5 (177 aa).

Positions 21-84 (LKEKMISVNR…DEARRGMIKI (64 aa)) constitute an S5 DRBM domain.

Belongs to the universal ribosomal protein uS5 family. As to quaternary structure, part of the 30S ribosomal subunit. Contacts proteins S4 and S8.

In terms of biological role, with S4 and S12 plays an important role in translational accuracy. Functionally, located at the back of the 30S subunit body where it stabilizes the conformation of the head with respect to the body. The chain is Small ribosomal subunit protein uS5 from Nitrosomonas eutropha (strain DSM 101675 / C91 / Nm57).